The sequence spans 367 residues: Flagellar P-ring protein (367 aa).

The signal sequence occupies residues 1–24 (MLRPIITLLCLTLMLCTAAGPAGA).

Belongs to the FlgI family. The basal body constitutes a major portion of the flagellar organelle and consists of four rings (L,P,S, and M) mounted on a central rod.

The protein resides in the periplasm. Its subcellular location is the bacterial flagellum basal body. Assembles around the rod to form the L-ring and probably protects the motor/basal body from shearing forces during rotation. This is Flagellar P-ring protein from Syntrophotalea carbinolica (strain DSM 2380 / NBRC 103641 / GraBd1) (Pelobacter carbinolicus).